Consider the following 704-residue polypeptide: Meprin A subunit beta (704 aa).

The N-terminal stretch at 1-20 is a signal peptide; it reads MDARHWPWFLVFATFLLVSG. The propeptide occupies 21–64; sequence LPAPEKFVKDIDGGIDQDIFDINEDLGLDLFEGDIKLEASGRNS. Over 21-654 the chain is Extracellular; the sequence is LPAPEKFVKD…RCEKRGSTKD (634 aa). One can recognise a Peptidase M12A domain in the interval 63–257; the sequence is NSIIGDNYRW…LKLNQLYSCT (195 aa). 3 cysteine pairs are disulfide-bonded: C104–C256, C125–C145, and C266–C428. Zn(2+) is bound at residue H153. E154 is an active-site residue. The Zn(2+) site is built by H157 and H163. 8 N-linked (GlcNAc...) asparagine glycosylation sites follow: N193, N219, N316, N422, N437, N528, N547, and N592. Residues 261-430 enclose the MAM domain; it reads SFMDSCDFEL…INLSETRCPH (170 aa). An MATH domain is found at 431–585; it reads HIWHIQNFTQ…GDDVYILLTV (155 aa). The EGF-like domain maps to 607 to 647; that stretch reads VHNACSEVECQNGGICTLQEGRAECKCPAGEDWWYMGKRCE. 3 cysteine pairs are disulfide-bonded: C611-C622, C616-C631, and C633-C646. A helical membrane pass occupies residues 655–678; that stretch reads TIVIAVSSTVTVFAVMLIITLISV. The Cytoplasmic portion of the chain corresponds to 679-704; it reads YCTRRKYRKKASAKTAAMNLENQHAF. T693 is subject to Phosphothreonine.

Homotetramer consisting of disulfide-linked beta subunits, or heterotetramer of two alpha and two beta subunits formed by non-covalent association of two disulfide-linked heterodimers. Interacts with MBL2 through its carbohydrate moiety. This interaction may inhibit its catalytic activity. Interacts with TSPAN8. Zn(2+) serves as cofactor. N-glycosylated; contains high mannose and/or complex biantennary structures. In terms of processing, proteolytically activated by trypsin in the intestinal lumen and kallikrein-related peptidases in other tissues. Post-translationally, phosphorylated by PKC at multiple sites of its cytoplasmic part. Phosphorylation dcreases activity at the cell surface, leading to diminished substrate cleavage. As to expression, kidney, intestinal brush borders and salivary ducts.

The protein resides in the cell membrane. It localises to the secreted. It catalyses the reaction Hydrolysis of proteins, including azocasein, and peptides. Hydrolysis of 5-His-|-Leu-6, 6-Leu-|-Cys-7, 14-Ala-|-Leu-15 and 19-Cys-|-Gly-20 bonds in insulin B chain.. Strongly inhibited by fetuin-A/AHSG. Its function is as follows. Membrane metallopeptidase that sheds many membrane-bound proteins. Exhibits a strong preference for acidic amino acids at the P1' position. Known substrates include: FGF19, VGFA, IL1B, IL18, procollagen I and III, E-cadherin, KLK7, gastrin, ADAM10, tenascin-C. The presence of several pro-inflammatory cytokine among substrates implicate MEP1B in inflammation. It is also involved in tissue remodeling due to its capability to degrade extracellular matrix components. This Rattus norvegicus (Rat) protein is Meprin A subunit beta (Mep1b).